A 346-amino-acid polypeptide reads, in one-letter code: N-acetyl-gamma-glutamyl-phosphate reductase (346 aa).

Cys-150 is a catalytic residue.

The protein belongs to the NAGSA dehydrogenase family. Type 1 subfamily.

The protein localises to the cytoplasm. It catalyses the reaction N-acetyl-L-glutamate 5-semialdehyde + phosphate + NADP(+) = N-acetyl-L-glutamyl 5-phosphate + NADPH + H(+). It participates in amino-acid biosynthesis; L-arginine biosynthesis; N(2)-acetyl-L-ornithine from L-glutamate: step 3/4. Its function is as follows. Catalyzes the NADPH-dependent reduction of N-acetyl-5-glutamyl phosphate to yield N-acetyl-L-glutamate 5-semialdehyde. The polypeptide is N-acetyl-gamma-glutamyl-phosphate reductase (Brevibacillus brevis (strain 47 / JCM 6285 / NBRC 100599)).